The primary structure comprises 126 residues: H2B.U histone 2 (126 aa).

The segment at 1–35 (MPEPSRSTPAPKKGSKKAITKAQKKDGKKRKRGRK) is disordered. An N-acetylproline modification is found at Pro-2. Glu-3 is modified (ADP-ribosyl glutamic acid). Ser-7 bears the ADP-ribosylserine mark. Lys-12 carries the N6-(beta-hydroxybutyryl)lysine; alternate modification. Lys-12 and Lys-13 each carry N6-acetyllysine; alternate. Lys-12 and Lys-13 each carry N6-crotonyllysine; alternate. Lys-12 carries the N6-lactoyllysine; alternate modification. N6-(2-hydroxyisobutyryl)lysine; alternate is present on Lys-13. Ser-15 carries the post-translational modification Phosphoserine; by STK4/MST1. An N6-acetyllysine; alternate mark is found at Lys-16, Lys-17, Lys-21, and Lys-24. N6-crotonyllysine; alternate occurs at positions 16, 17, 21, and 24. An N6-lactoyllysine; alternate mark is found at Lys-16, Lys-17, Lys-21, and Lys-24. Lys-17 is modified (N6-glutaryllysine; alternate). Lys-21 is modified (N6-(beta-hydroxybutyryl)lysine; alternate). Residues Lys-21 and Lys-24 each carry the N6-(2-hydroxyisobutyryl)lysine; alternate modification. Residue Lys-21 is modified to N6-butyryllysine; alternate. Residue Lys-21 forms a Glycyl lysine isopeptide (Lys-Gly) (interchain with G-Cter in SUMO2); alternate linkage. Position 25 is an N6-(2-hydroxyisobutyryl)lysine (Lys-25). The residue at position 35 (Lys-35) is an N6-(beta-hydroxybutyryl)lysine; alternate. Lys-35 carries the N6-crotonyllysine; alternate modification. Lys-35 bears the N6-(2-hydroxyisobutyryl)lysine; alternate mark. Lys-35 is modified (N6-glutaryllysine; alternate). At Lys-35 the chain carries N6-succinyllysine; alternate. Residue Lys-35 forms a Glycyl lysine isopeptide (Lys-Gly) (interchain with G-Cter in ubiquitin); alternate linkage. At Glu-36 the chain carries PolyADP-ribosyl glutamic acid. Ser-37 bears the Phosphoserine; by AMPK mark. Residue Lys-44 is modified to N6-lactoyllysine; alternate. 3 positions are modified to N6-(2-hydroxyisobutyryl)lysine; alternate: Lys-44, Lys-47, and Lys-58. 2 positions are modified to N6-glutaryllysine; alternate: Lys-44 and Lys-47. At Lys-47 the chain carries N6-methyllysine; alternate. Residue Lys-58 is modified to N6,N6-dimethyllysine; alternate. Position 80 is a dimethylated arginine (Arg-80). Lys-86 carries the N6-acetyllysine; alternate modification. Lys-86 is modified (N6-lactoyllysine; alternate). Position 86 is an N6-(2-hydroxyisobutyryl)lysine; alternate (Lys-86). Lys-86 carries the N6,N6,N6-trimethyllysine; alternate modification. 2 positions are modified to omega-N-methylarginine: Arg-87 and Arg-93. N6-(beta-hydroxybutyryl)lysine; alternate is present on Lys-109. Lys-109 bears the N6-lactoyllysine; alternate mark. Lys-109 carries the post-translational modification N6-(2-hydroxyisobutyryl)lysine; alternate. Position 109 is an N6-glutaryllysine; alternate (Lys-109). Lys-109 is modified (N6-methyllysine; alternate). The O-linked (GlcNAc) serine glycan is linked to Ser-113. The residue at position 116 (Thr-116) is a Phosphothreonine. Lys-117 bears the N6-(beta-hydroxybutyryl)lysine; alternate mark. Lys-117 and Lys-121 each carry N6-lactoyllysine; alternate. Lys-117 and Lys-121 each carry N6-(2-hydroxyisobutyryl)lysine; alternate. N6-glutaryllysine; alternate occurs at positions 117 and 121. Lys-117 and Lys-121 each carry N6-succinyllysine; alternate. Position 117 is an N6-methylated lysine; alternate (Lys-117). A Glycyl lysine isopeptide (Lys-Gly) (interchain with G-Cter in ubiquitin); alternate cross-link involves residue Lys-121.

The protein belongs to the histone H2B family. In terms of assembly, the nucleosome is a histone octamer containing two molecules each of H2A, H2B, H3 and H4 assembled in one H3-H4 heterotetramer and two H2A-H2B heterodimers. The octamer wraps approximately 147 bp of DNA. In terms of processing, monoubiquitination at Lys-35 (H2BK34Ub) by the MSL1/MSL2 dimer is required for histone H3 'Lys-4' (H3K4me) and 'Lys-79' (H3K79me) methylation and transcription activation at specific gene loci, such as HOXA9 and MEIS1 loci. Similarly, monoubiquitination at Lys-121 (H2BK120Ub) by the RNF20/40 complex gives a specific tag for epigenetic transcriptional activation and is also prerequisite for histone H3 'Lys-4' and 'Lys-79' methylation. It also functions cooperatively with the FACT dimer to stimulate elongation by RNA polymerase II. H2BK120Ub also acts as a regulator of mRNA splicing: deubiquitination by USP49 is required for efficient cotranscriptional splicing of a large set of exons. Phosphorylated on Ser-15 (H2BS14ph) by STK4/MST1 during apoptosis; which facilitates apoptotic chromatin condensation. Also phosphorylated on Ser-15 in response to DNA double strand breaks (DSBs), and in correlation with somatic hypermutation and immunoglobulin class-switch recombination. Phosphorylation at Ser-37 (H2BS36ph) by AMPK in response to stress promotes transcription. Post-translationally, glcNAcylation at Ser-113 promotes monoubiquitination of Lys-121. It fluctuates in response to extracellular glucose, and associates with transcribed genes. In terms of processing, ADP-ribosylated by PARP1 or PARP2 on Ser-7 (H2BS6ADPr) in response to DNA damage. H2BS6ADPr promotes recruitment of CHD1L. Mono-ADP-ribosylated on Glu-3 (H2BE2ADPr) by PARP3 in response to single-strand breaks. Poly ADP-ribosylation on Glu-36 (H2BE35ADPr) by PARP1 regulates adipogenesis: it inhibits phosphorylation at Ser-37 (H2BS36ph), thereby blocking expression of pro-adipogenetic genes. Crotonylation (Kcr) is specifically present in male germ cells and marks testis-specific genes in post-meiotic cells, including X-linked genes that escape sex chromosome inactivation in haploid cells. Crotonylation marks active promoters and enhancers and confers resistance to transcriptional repressors. It is also associated with post-meiotically activated genes on autosomes. Post-translationally, hydroxybutyrylation of histones is induced by starvation. In terms of processing, lactylated in macrophages by EP300/P300 by using lactoyl-CoA directly derived from endogenous or exogenous lactate, leading to stimulates gene transcription.

The protein localises to the nucleus. It localises to the chromosome. Its function is as follows. Core component of nucleosome. Nucleosomes wrap and compact DNA into chromatin, limiting DNA accessibility to the cellular machineries which require DNA as a template. Histones thereby play a central role in transcription regulation, DNA repair, DNA replication and chromosomal stability. DNA accessibility is regulated via a complex set of post-translational modifications of histones, also called histone code, and nucleosome remodeling. This is H2B.U histone 2 from Mus musculus (Mouse).